The following is a 291-amino-acid chain: Undecaprenyl-diphosphatase (291 aa).

The next 8 membrane-spanning stretches (helical) occupy residues 1 to 21 (MFII…LTEF), 48 to 68 (SAFT…AWVF), 102 to 122 (LHVL…DDFI), 126 to 146 (LFSV…MIIA), 162 to 182 (INYF…WPGF), 203 to 223 (SDFT…LSLL), 236 to 256 (FYIL…KTFL), and 267 to 287 (FAIY…GFGI).

Belongs to the UppP family.

The protein resides in the cell membrane. The enzyme catalyses di-trans,octa-cis-undecaprenyl diphosphate + H2O = di-trans,octa-cis-undecaprenyl phosphate + phosphate + H(+). Its function is as follows. Catalyzes the dephosphorylation of undecaprenyl diphosphate (UPP). Confers resistance to bacitracin. In Staphylococcus aureus (strain MSSA476), this protein is Undecaprenyl-diphosphatase.